The chain runs to 703 residues: Calpain-8 (703 aa).

Residues 45-344 (LFKDPEFPAC…YSRLEICNLS (300 aa)) enclose the Calpain catalytic domain. Active-site residues include cysteine 105, histidine 262, and asparagine 286. A domain III region spans residues 355–512 (KWNLVLFNGR…VFSEKKAKAL (158 aa)). Positions 513–531 (EIGDTVSGHPHEPHPRDMD) are linker. EF-hand domains are found at residues 532–566 (EEDE…VLSK), 575–608 (FNIN…LKIR), 605–640 (LKIR…AGFT), and 670–703 (IRLE…CVLV). A domain IV region spans residues 532–703 (EEDEHVRSLF…LAEWLCCVLV (172 aa)). Residues aspartate 588, aspartate 590, threonine 592, serine 594, glutamate 599, aspartate 618, asparagine 620, threonine 624, and glutamate 629 each contribute to the Ca(2+) site.

The protein belongs to the peptidase C2 family. Monomer and homooligomer. Interacts with COPS1/GPS1, COPB1, EYA2, NME2, NME4 and TOMM70. It depends on Ca(2+) as a cofactor. In terms of processing, undergoes autolytic cleavage between Ala-5 and Ala-6 which gives rise to fragments extending from Ala-6 to the C-terminus, Ala-6 to the EF-hand 2 domain and from Ala-6 to the beginning of domain III. Predominantly expressed in the stomach. Localizes strictly to the surface mucus cells in the gastric epithelium and the mucus-secreting goblet cells in the duodenum. Detected in the pituitary after estrogen stimulation.

The protein localises to the cytoplasm. The protein resides in the golgi apparatus. It carries out the reaction Broad endopeptidase specificity.. Its function is as follows. Calcium-regulated non-lysosomal thiol-protease. Involved in membrane trafficking in the gastric surface mucus cells (pit cells) and may involve the membrane trafficking of mucus cells via interactions with coat protein. Proteolytically cleaves the beta-subunit of coatomer complex. The chain is Calpain-8 (Capn8) from Rattus norvegicus (Rat).